A 362-amino-acid chain; its full sequence is Protein RAFTIN 1B (362 aa).

Positions 1–20 (MARFLVALLAATLVAVQAGG) are cleaved as a signal peptide. The tract at residues 58-94 (STSFVRDPEDRPPFDYRDYSRSSSDDEPSKSTVAASG) is disordered. The segment covering 63-86 (RDPEDRPPFDYRDYSRSSSDDEPS) has biased composition (basic and acidic residues). A glycan (N-linked (GlcNAc...) asparagine) is linked at N102. In terms of domain architecture, BURP spans 142-356 (FFHEEAVRVG…PYGHIIWAKN (215 aa)).

Specifically expressed in anthers, in the tapetum and microspores (at protein level).

Functionally, required for pollen development. Probably synthesized in the tapetum, packaged in Ubisch bodies and transported at appropriate stages to the micropsores. The chain is Protein RAFTIN 1B (RAFTIN1B) from Triticum aestivum (Wheat).